Reading from the N-terminus, the 207-residue chain is N-(5'-phosphoribosyl)anthranilate isomerase (207 aa).

Belongs to the TrpF family.

The catalysed reaction is N-(5-phospho-beta-D-ribosyl)anthranilate = 1-(2-carboxyphenylamino)-1-deoxy-D-ribulose 5-phosphate. It participates in amino-acid biosynthesis; L-tryptophan biosynthesis; L-tryptophan from chorismate: step 3/5. The protein is N-(5'-phosphoribosyl)anthranilate isomerase of Legionella pneumophila (strain Paris).